A 619-amino-acid polypeptide reads, in one-letter code: UPF0329 protein ECU01_0100/ECU01_1510/ECU08_0030 (619 aa).

The segment covering 350–384 (REEREKREKREKREESKGRGKRGAGEAKEESKEED) has biased composition (basic and acidic residues). The segment at 350–428 (REEREKREKR…GKRKGDGHHY (79 aa)) is disordered. The span at 385–399 (GKEEEGVEAEEEESA) shows a compositional bias: acidic residues. Residues 411 to 428 (ARRKKSLKGKRKGDGHHY) show a composition bias toward basic residues.

The protein belongs to the UPF0329 family.

The chain is UPF0329 protein ECU01_0100/ECU01_1510/ECU08_0030 from Encephalitozoon cuniculi (strain GB-M1) (Microsporidian parasite).